A 244-amino-acid polypeptide reads, in one-letter code: Triosephosphate isomerase (244 aa).

9–11 (NWK) is a substrate binding site. The active-site Electrophile is histidine 93. The active-site Proton acceptor is the glutamate 160. Residues glycine 166 and serine 206 each coordinate substrate.

It belongs to the triosephosphate isomerase family. Homodimer.

Its subcellular location is the cytoplasm. It catalyses the reaction D-glyceraldehyde 3-phosphate = dihydroxyacetone phosphate. The protein operates within carbohydrate biosynthesis; gluconeogenesis. It functions in the pathway carbohydrate degradation; glycolysis; D-glyceraldehyde 3-phosphate from glycerone phosphate: step 1/1. Involved in the gluconeogenesis. Catalyzes stereospecifically the conversion of dihydroxyacetone phosphate (DHAP) to D-glyceraldehyde-3-phosphate (G3P). The polypeptide is Triosephosphate isomerase (Mycoplasma pneumoniae (strain ATCC 29342 / M129 / Subtype 1) (Mycoplasmoides pneumoniae)).